We begin with the raw amino-acid sequence, 410 residues long: Iron-sulfur cluster assembly SufBD family protein MTH1150 homolog (410 aa).

This sequence belongs to the iron-sulfur cluster assembly SufBD family.

In Methanothermobacter thermautotrophicus (strain Winter) (Methanobacterium thermoautotrophicum), this protein is Iron-sulfur cluster assembly SufBD family protein MTH1150 homolog.